We begin with the raw amino-acid sequence, 563 residues long: Arginine--tRNA ligase (563 aa).

The 'HIGH' region motif lies at 123–133; sequence PNIAKDMHVGH.

It belongs to the class-I aminoacyl-tRNA synthetase family. As to quaternary structure, monomer.

It localises to the cytoplasm. It catalyses the reaction tRNA(Arg) + L-arginine + ATP = L-arginyl-tRNA(Arg) + AMP + diphosphate. This chain is Arginine--tRNA ligase, found in Chlamydia trachomatis serovar A (strain ATCC VR-571B / DSM 19440 / HAR-13).